The chain runs to 423 residues: L-cysteine:1D-myo-inositol 2-amino-2-deoxy-alpha-D-glucopyranoside ligase (423 aa).

Cys45 lines the Zn(2+) pocket. Residues 45-48, Thr60, and 83-85 each bind L-cysteinyl-5'-AMP; these read CGIT and NVT. The 'HIGH' region motif lies at 47-57; sequence ITPYDATHIGH. The 'ERGGDP' region signature appears at 197-202; the sequence is DRGGDP. Trp238 lines the L-cysteinyl-5'-AMP pocket. Zn(2+) is bound at residue Cys242. An L-cysteinyl-5'-AMP-binding site is contributed by 260-262; the sequence is GSD. Zn(2+) is bound at residue His267. Ile294 is an L-cysteinyl-5'-AMP binding site. The short motif at 300–304 is the 'KMSKS' region element; sequence KMSKS.

Belongs to the class-I aminoacyl-tRNA synthetase family. MshC subfamily. Monomer. Requires Zn(2+) as cofactor.

The enzyme catalyses 1D-myo-inositol 2-amino-2-deoxy-alpha-D-glucopyranoside + L-cysteine + ATP = 1D-myo-inositol 2-(L-cysteinylamino)-2-deoxy-alpha-D-glucopyranoside + AMP + diphosphate + H(+). Catalyzes the ATP-dependent condensation of GlcN-Ins and L-cysteine to form L-Cys-GlcN-Ins. The polypeptide is L-cysteine:1D-myo-inositol 2-amino-2-deoxy-alpha-D-glucopyranoside ligase (Jonesia denitrificans (strain ATCC 14870 / DSM 20603 / BCRC 15368 / CIP 55.134 / JCM 11481 / NBRC 15587 / NCTC 10816 / Prevot 55134) (Listeria denitrificans)).